The primary structure comprises 1222 residues: Probable disease resistance protein At5g45510 (1222 aa).

49–56 (GEAGIGKT) provides a ligand contact to ATP. Residues 122–183 (GERDEDEEEE…KLEAEKKLVD (62 aa)) adopt a coiled-coil conformation. Basic and acidic residues-rich tracts occupy residues 171–205 (AAEKLEAEKKLVDPAAKKAKDHGNKNPTDAAKEKT), 212–224 (GEDKAQTSSERKP), 263–279 (RRQETEEATKSGEHAEG), and 286–322 (SGEKKEDTDGEDEIRSADKEEPESQARVKTEEKHEKV). Disordered stretches follow at residues 171-225 (AAEK…RKPY) and 263-327 (RRQE…PPTI). Thr293 carries the phosphothreonine modification. LRR repeat units follow at residues 654–676 (LLRVLIIRDCDLLKSIEELKALT), 677–699 (KLNTLEVSGASSLSKISEKFFES), 702–724 (ELRSLHLSGLKIESSPPSISGLK), 725–747 (ELHCLIIKDCPLLQDLPNIQELV), 785–806 (KLQHLDFSGSQIERLPIFQDSA), 813–835 (SLTRLLLRNCSKLRRLPSLKPLS), 836–856 (GLQILDLSGTTSLVEMLEVCF), 861–883 (ELKTLNLSGTNLSELATTIEDLS), 884–906 (SLNELLLRDCINLDAIPNIEKLE), 907–929 (NLEVIDVSGSAKLAKIEGSFEKM), and 931–951 (YLRVVDLSGTQVETPELPADT).

The protein belongs to the disease resistance NB-LRR family.

Its function is as follows. Probable disease resistance protein. This chain is Probable disease resistance protein At5g45510, found in Arabidopsis thaliana (Mouse-ear cress).